A 353-amino-acid polypeptide reads, in one-letter code: tRNA-specific 2-thiouridylase MnmA 1 (353 aa).

ATP contacts are provided by residues 9–16 (AMSGGVDS) and M35. C98 (nucleophile) is an active-site residue. A disulfide bond links C98 and C194. ATP is bound at residue G122. The interaction with tRNA stretch occupies residues 144 to 146 (KDQ). Residue C194 is the Cysteine persulfide intermediate of the active site. An interaction with tRNA region spans residues 300–301 (RY).

The protein belongs to the MnmA/TRMU family.

The protein localises to the cytoplasm. The enzyme catalyses S-sulfanyl-L-cysteinyl-[protein] + uridine(34) in tRNA + AH2 + ATP = 2-thiouridine(34) in tRNA + L-cysteinyl-[protein] + A + AMP + diphosphate + H(+). Its function is as follows. Catalyzes the 2-thiolation of uridine at the wobble position (U34) of tRNA, leading to the formation of s(2)U34. The sequence is that of tRNA-specific 2-thiouridylase MnmA 1 from Clostridium botulinum (strain Okra / Type B1).